The following is a 23-amino-acid chain: Hemocyanin subunit 1 (23 aa).

The tract at residues 1 to 23 (DSPGGASDTQKQHXVNSXXXKXY) is disordered.

Belongs to the tyrosinase family. Hemocyanin subfamily. Hemolymph.

It localises to the secreted. Its subcellular location is the extracellular space. In terms of biological role, hemocyanins are copper-containing oxygen carriers occurring freely dissolved in the hemolymph of many mollusks and arthropods. This is Hemocyanin subunit 1 from Cancer pagurus (Rock crab).